Reading from the N-terminus, the 539-residue chain is MAANNLSYTIAPLEHTPLDEIAAKVDLVRKTFRSGRTKDMEFRMKQIRKLYWAIVDNTELMQDALIKDLRKCKYEAVLAEIDWCKQECIDMVNNMEKWLRDEPVPNVPLQFRAMKHRTRFEPLGVVLNIGSFNFPFQLNLPVVIGAIACGNCVVLKASESSPNCAMVLKKIFDESLDPECFTYVNGALPETQLLLEQKFDKICFTGGKAVGKIIAQKAAETLTPVLLELGGLNPAFVTKHANLKLAARRLLWQKSLNAGQVCMSHNYILVERSVLSQFLGELNNQMRTFFPQGAKNSPDLCRIVNAGHFNRLKKMLDGTNGKIVLGGSMDESTLFMEPTAVLVDDINDSMMTQEAFGPIFAMMAVDSLDQAIDIANTVDPTPLSLSAFGSKAENNKILDNVTSGGATCNDAFFHSQIPQSPLGGVGQSGMGNYHGIYSIRTFSHQRTIAEVPYWADFLFRVRYMPYQWPVMNRMKAVADSKPNFDRNGNKTKGITYFLALVLGLGSKKSKGALLRWAVLVVAAAILEAKKGVLSQLLTR.

Active-site residues include E228 and C262.

This sequence belongs to the aldehyde dehydrogenase family.

It catalyses the reaction 4'-apo-beta-carotenal + NAD(+) + H2O = neurosporaxanthin + NADH + 2 H(+). Beta-apo-4'-carotenal oxygenase involved in the last step of synthesis of neurosporaxanthin, a carboxylic apocarotenoid acting as an essential protective pigments and leading to orange pigmentation. Converts the aldehyde beta-apo-4'-carotenal into neurosporaxanthin. Is also able to use shorter apocarotenals as substrates (such as beta-apo-8'-carotenal (C30), beta-apo-10'-carotenal (C27), or the acyclic apocarotenal apo-8'-lycopenal (C30)), indicating wide substrate specificity. Neurosporaxanthin is synthesized from geranyl-geranyl pyrophosphate (GGPP) through several enzymatic activities. Phytoene synthase activity performed by the bifunctional enzyme carAR first produces phytoene from geranyl-geranyl pyrophosphate (GGPP). The phytoene dehydrogenase carB then introduces 4 desaturations to lead to lycopene which is substrate of the carotene cyclase activity of carAR that leads to the production of gamma-carotene. CarB then performs a 5th desaturation reaction to yield torulene. Torulene is the substrate of the dioxidase carT that breaks the molecule, removing five carbon atoms to yield beta-apo-4'-carotenal, whereas the aldehyde dehydrogenase carD mediates the last step by converting beta-apo-4'-carotenal into neurosporaxanthin. The protein is Beta-apo-4'-carotenal oxygenase of Gibberella fujikuroi (strain CBS 195.34 / IMI 58289 / NRRL A-6831) (Bakanae and foot rot disease fungus).